The following is a 145-amino-acid chain: D-aminoacyl-tRNA deacylase (145 aa).

A Gly-cisPro motif, important for rejection of L-amino acids motif is present at residues 137–138; it reads GP.

The protein belongs to the DTD family. As to quaternary structure, homodimer.

It localises to the cytoplasm. The catalysed reaction is glycyl-tRNA(Ala) + H2O = tRNA(Ala) + glycine + H(+). It catalyses the reaction a D-aminoacyl-tRNA + H2O = a tRNA + a D-alpha-amino acid + H(+). An aminoacyl-tRNA editing enzyme that deacylates mischarged D-aminoacyl-tRNAs. Also deacylates mischarged glycyl-tRNA(Ala), protecting cells against glycine mischarging by AlaRS. Acts via tRNA-based rather than protein-based catalysis; rejects L-amino acids rather than detecting D-amino acids in the active site. By recycling D-aminoacyl-tRNA to D-amino acids and free tRNA molecules, this enzyme counteracts the toxicity associated with the formation of D-aminoacyl-tRNA entities in vivo and helps enforce protein L-homochirality. The sequence is that of D-aminoacyl-tRNA deacylase from Carboxydothermus hydrogenoformans (strain ATCC BAA-161 / DSM 6008 / Z-2901).